A 343-amino-acid polypeptide reads, in one-letter code: Protein RecA (343 aa).

66-73 (GPESSGKT) serves as a coordination point for ATP.

This sequence belongs to the RecA family.

The protein resides in the cytoplasm. Can catalyze the hydrolysis of ATP in the presence of single-stranded DNA, the ATP-dependent uptake of single-stranded DNA by duplex DNA, and the ATP-dependent hybridization of homologous single-stranded DNAs. It interacts with LexA causing its activation and leading to its autocatalytic cleavage. This chain is Protein RecA, found in Rickettsia massiliae (strain Mtu5).